We begin with the raw amino-acid sequence, 325 residues long: Pyruvate dehydrogenase E1 component subunit beta (325 aa).

Residue Glu59 participates in thiamine diphosphate binding.

As to quaternary structure, heterodimer of an alpha and a beta chain. The cofactor is thiamine diphosphate.

It carries out the reaction N(6)-[(R)-lipoyl]-L-lysyl-[protein] + pyruvate + H(+) = N(6)-[(R)-S(8)-acetyldihydrolipoyl]-L-lysyl-[protein] + CO2. Its function is as follows. The pyruvate dehydrogenase complex catalyzes the overall conversion of pyruvate to acetyl-CoA and CO(2). It contains multiple copies of three enzymatic components: pyruvate dehydrogenase (E1), dihydrolipoamide acetyltransferase (E2) and lipoamide dehydrogenase (E3). The chain is Pyruvate dehydrogenase E1 component subunit beta (pdhB) from Rickettsia bellii (strain RML369-C).